A 447-amino-acid chain; its full sequence is MKPVVALVGRPNVGKSTLFNRLTQTRDAIVADFAGLTRDRHYGNGRLGKHEFIVIDTGGFEPDAGSGIYKEMAKQTRQAVAEADVVIFVVDAREGLSAQDHDIANELRRLGKPCVLAANKAEGMHDGTKLVDFYELGFGDVHGVSAAHGQGMRDLVELALAPLNLPDPDDEADEDDVNKPIKLAVAGRPNVGKSTLINTWLGEERLVAFDLPGTTRDAISVPFERNGQRFELIDTAGLRRKGKVFEAIEKFSVVKTLQAIESASVVLLLLDATQGVTDQDAHIAGYILESGRAVVIAINKWDAVDSYQREQIQRQIETRLPFLKFASLHFISAIKRQGLGPVWQAIAQAHKSATRKMSTPVLTRLLLEAVQFQSPKRAGMFRPKLRYAHQGGMNPPVIIIHGNSLEHVTEAYKRFLEGRFRKEFDLVGTPLRIQFKSSQNPFADKDD.

2 consecutive EngA-type G domains span residues 3 to 167 (PVVA…NLPD) and 181 to 354 (IKLA…KSAT). Residues 9–16 (GRPNVGKS), 56–60 (DTGGF), 119–122 (NKAE), 187–194 (GRPNVGKS), 234–238 (DTAGL), and 299–302 (NKWD) each bind GTP. Residues 355–439 (RKMSTPVLTR…PLRIQFKSSQ (85 aa)) form the KH-like domain.

It belongs to the TRAFAC class TrmE-Era-EngA-EngB-Septin-like GTPase superfamily. EngA (Der) GTPase family. As to quaternary structure, associates with the 50S ribosomal subunit.

In terms of biological role, GTPase that plays an essential role in the late steps of ribosome biogenesis. This is GTPase Der from Variovorax paradoxus (strain S110).